The following is a 64-amino-acid chain: Putative neurotoxin 6 (64 aa).

A signal peptide spans Met-1–Thr-24.

This sequence belongs to the scolopendra neurotoxin 6 family. In terms of processing, contains 3 disulfide bonds. As to expression, expressed by the venom gland.

The protein localises to the secreted. This chain is Putative neurotoxin 6, found in Scolopendra mutilans (Chinese red-headed centipede).